Reading from the N-terminus, the 384-residue chain is MKVTSLDGRQLRKMLRKEAAARCVVLDCRPYLAFAASNVRGSLNVNLNSVVLRRARGGAVSARYVLPDEAARARLLQEGGGGVAAVVVLDQGSRHWQKLREESAARVVLTSLLACLPAGPRVYFLKGGYETFYSEYPECCVDVKPISQEKIESERALISQCGKPVVNVSYRPAYDQGGPVEILPFLYLGSAYHASKCEFLANLHITALLNVSRRTSEACATHLHYKWIPVEDSHTADISSHFQEAIDFIDCVREKGGKVLVHCEAGISRSPTICMAYLMKTKQFRLKEAFDYIKQRRSMVSPNFGFMGQLLQYESEILPSTPNPQPPSCQGEAAGSSLIGHLQTLSPDMQGAYCTFPASVLAPVPTHSTVSELSRSPVATATSC.

The region spanning 19–141 is the Rhodanese domain; sequence AAARCVVLDC…FYSEYPECCV (123 aa). Positions 53–74 match the Nuclear localization signal motif; sequence RRARGGAVSARYVLPDEAARAR. Residues 178–319 form the Tyrosine-protein phosphatase domain; sequence GPVEILPFLY…LLQYESEILP (142 aa). The active-site Phosphocysteine intermediate is cysteine 263.

It belongs to the protein-tyrosine phosphatase family. Non-receptor class dual specificity subfamily.

Its subcellular location is the nucleus. It catalyses the reaction O-phospho-L-tyrosyl-[protein] + H2O = L-tyrosyl-[protein] + phosphate. It carries out the reaction O-phospho-L-seryl-[protein] + H2O = L-seryl-[protein] + phosphate. The enzyme catalyses O-phospho-L-threonyl-[protein] + H2O = L-threonyl-[protein] + phosphate. Its function is as follows. Dual specificity protein phosphatase; active with phosphotyrosine, phosphoserine and phosphothreonine residues. The highest relative activity is toward ERK1. The protein is Dual specificity protein phosphatase 5 (DUSP5) of Homo sapiens (Human).